The primary structure comprises 304 residues: Protease HtpX homolog (304 aa).

2 consecutive transmembrane segments (helical) span residues 14-34 (IFII…IGII) and 39-59 (YLNG…IMVM). Zn(2+) is bound at residue His144. Glu145 is an active-site residue. His148 contributes to the Zn(2+) binding site. A run of 2 helical transmembrane segments spans residues 159–179 (IAIA…RMIF) and 202–222 (AIIY…ATAI). Glu231 is a binding site for Zn(2+).

It belongs to the peptidase M48B family. Zn(2+) is required as a cofactor.

Its subcellular location is the cell membrane. This Listeria monocytogenes serovar 1/2a (strain ATCC BAA-679 / EGD-e) protein is Protease HtpX homolog.